A 599-amino-acid polypeptide reads, in one-letter code: MNIKNYTIEELEELSQKIRQRILEVVSKNGGHLSSTLGAVELIVSMHYVFDVEKDPFIFDVSHQAYAHKLLTDRWEQFDTLRQFGGISGYTKPKESPYDYWVAGHSSTSISLAVGAAKAIALKNEDRVPVVLIGDGAMSAGMVYEALNELGDRKYPVVIILNDNEMSIAKPIGAVSKYLSQKMASPFYQNMKKRTEQLLKHLPESATYIAKRMEESLKLITPGILFEELGIDYIGPIDGHDLKVLIETLTIAKQMNRPVIIHAQTLKGKGYKIAEGYYEHWHGVGPFDISTGESLKKSTKPSATSIFSKKLYDLAKEDETVVGVTAAMPSGTGLKPLIEDFGDRFWDVGIAEQHAVTSMGPLAKEGFKPFVAIYSTFLQRGYDQVIHDIALMDVGVAFAIDRAGIVGEDGETHQGAFDVSYLRPIPNMHLFAPRDPKTLEYAVEFAKDFDRPCAFRYPRGSFILDDEFEAKPFELGKAELLVESEGDVLFVGYGNGVGRAYETMKHIDEPVSLLDLRFVKPLDVELLQELSKRYRQWFVFSDSAKLGGVASALLELELPVEIVTFEYEDQFIPHGKVIDVEKALGLLPQQLAKRVKSFI.

Residues His-63 and 104-106 (GHS) contribute to the thiamine diphosphate site. Asp-135 provides a ligand contact to Mg(2+). Thiamine diphosphate contacts are provided by residues 136-137 (GA), Asn-164, Tyr-271, and Glu-352. A Mg(2+)-binding site is contributed by Asn-164.

Belongs to the transketolase family. DXPS subfamily. Homodimer. Mg(2+) is required as a cofactor. Thiamine diphosphate serves as cofactor.

The enzyme catalyses D-glyceraldehyde 3-phosphate + pyruvate + H(+) = 1-deoxy-D-xylulose 5-phosphate + CO2. It functions in the pathway metabolic intermediate biosynthesis; 1-deoxy-D-xylulose 5-phosphate biosynthesis; 1-deoxy-D-xylulose 5-phosphate from D-glyceraldehyde 3-phosphate and pyruvate: step 1/1. Functionally, catalyzes the acyloin condensation reaction between C atoms 2 and 3 of pyruvate and glyceraldehyde 3-phosphate to yield 1-deoxy-D-xylulose-5-phosphate (DXP). The sequence is that of 1-deoxy-D-xylulose-5-phosphate synthase from Nitratiruptor sp. (strain SB155-2).